The sequence spans 259 residues: 7alpha-hydroxysteroid dehydrogenase (259 aa).

Residues Ile-18, 37–38, and Asn-90 contribute to the NAD(+) site; that span reads DY. 2 residues coordinate glycochenodeoxycholate: Ser-145 and Tyr-158. Residues Tyr-158, Lys-162, and 191 to 193 each bind NAD(+); that span reads ILT. The Proton acceptor role is filled by Tyr-158.

The protein belongs to the short-chain dehydrogenases/reductases (SDR) family. Homotetramer.

It catalyses the reaction cholate + NAD(+) = 3alpha,12alpha-dihydroxy-7-oxo-5beta-cholanate + NADH + H(+). The catalysed reaction is chenodeoxycholate + NAD(+) = 7-oxolithocholate + NADH + H(+). The enzyme catalyses taurochenodeoxycholate + NAD(+) = 7-oxotaurolithocholate + NADH + H(+). It carries out the reaction glycochenodeoxycholate + NAD(+) = 7-oxoglycolithocholate + NADH + H(+). It catalyses the reaction taurocholate + NAD(+) = 7-oxo-taurodeoxycholate + NADH + H(+). The catalysed reaction is glycocholate + NAD(+) = 7-oxo-glycodeoxycholate + NADH + H(+). The enzyme catalyses an aromatic primary alcohol + NAD(+) = an aromatic aldehyde + NADH + H(+). It carries out the reaction benzyl alcohol + NAD(+) = benzaldehyde + NADH + H(+). It catalyses the reaction 4-cyanobenzyl alcohol + NAD(+) = 4-cyanobenzaldehyde + NADH + H(+). The catalysed reaction is 4-acetoxybenzyl alcohol + NAD(+) = 4-acetoxybenzaldehyde + NADH + H(+). The enzyme catalyses 4-(trifluoromethyl)benzyl alcohol + NAD(+) = 4-(trifluoromethyl)benzaldehyde + NADH + H(+). In terms of biological role, 7alpha-hydroxysteroid dehydrogenase involved in the metabolism of bile acids in the gut. Catalyzes the NAD(+)-dependent oxidation of the 7alpha-hydroxy group of 7alpha-hydroxysteroids, such as cholate, chenodeoxycholate, taurochenodeoxycholate, glycochenodeoxycholate, taurocholate and glycocholate, to the corresponding 7-oxosteroids. Since it is also able to catalyze the reduction of nonsteroidal carbonyl compounds such as various benzaldehyde analogs to their corresponding benzyl alcohols, this enzyme may also function in the detoxification of xenobiotics containing carbonyl groups in the large intestine. The sequence is that of 7alpha-hydroxysteroid dehydrogenase from Bacteroides fragilis (strain ATCC 25285 / DSM 2151 / CCUG 4856 / JCM 11019 / LMG 10263 / NCTC 9343 / Onslow / VPI 2553 / EN-2).